The chain runs to 432 residues: 3-phosphoshikimate 1-carboxyvinyltransferase (432 aa).

3-phosphoshikimate contacts are provided by K25, S26, and R30. Position 25 (K25) interacts with phosphoenolpyruvate. Phosphoenolpyruvate is bound by residues G97 and R125. Positions 170, 172, 318, and 345 each coordinate 3-phosphoshikimate. Q172 lines the phosphoenolpyruvate pocket. Residue D318 is the Proton acceptor of the active site. Phosphoenolpyruvate-binding residues include R349 and R393.

This sequence belongs to the EPSP synthase family. Monomer.

It localises to the cytoplasm. It carries out the reaction 3-phosphoshikimate + phosphoenolpyruvate = 5-O-(1-carboxyvinyl)-3-phosphoshikimate + phosphate. The protein operates within metabolic intermediate biosynthesis; chorismate biosynthesis; chorismate from D-erythrose 4-phosphate and phosphoenolpyruvate: step 6/7. Functionally, catalyzes the transfer of the enolpyruvyl moiety of phosphoenolpyruvate (PEP) to the 5-hydroxyl of shikimate-3-phosphate (S3P) to produce enolpyruvyl shikimate-3-phosphate and inorganic phosphate. The polypeptide is 3-phosphoshikimate 1-carboxyvinyltransferase (Geobacillus thermodenitrificans (strain NG80-2)).